A 31-amino-acid chain; its full sequence is U14-ctenitoxin-Co1a (31 aa).

Post-translationally, disulfide bonds are present. As to expression, expressed by the venom gland.

The protein localises to the secreted. Its function is as follows. Omega-agatoxins are antagonists of voltage-gated calcium channels (Cav). The sequence is that of U14-ctenitoxin-Co1a from Ctenus ornatus (Brazilian spider).